The following is a 365-amino-acid chain: Flagellar P-ring protein (365 aa).

A signal peptide spans 1–20 (MKLPHFFVLAALVLSGAAHA).

This sequence belongs to the FlgI family. The basal body constitutes a major portion of the flagellar organelle and consists of four rings (L,P,S, and M) mounted on a central rod.

It localises to the periplasm. Its subcellular location is the bacterial flagellum basal body. In terms of biological role, assembles around the rod to form the L-ring and probably protects the motor/basal body from shearing forces during rotation. The protein is Flagellar P-ring protein of Thiobacillus denitrificans (strain ATCC 25259 / T1).